An 83-amino-acid chain; its full sequence is U5-theraphotoxin-Hs1a 4 (83 aa).

A signal peptide spans 1-21 (MKTSMFLTLTGLVLLFVDCYA). Residues 22–49 (SESEEKEFPKELLSSIFAADSDFKVEER) constitute a propeptide that is removed on maturation. 3 disulfide bridges follow: cysteine 51–cysteine 63, cysteine 56–cysteine 68, and cysteine 62–cysteine 75.

This sequence belongs to the neurotoxin 10 (Hwtx-1) family. 51 (Hntx-8) subfamily. Hntx-8 sub-subfamily. As to expression, expressed by the venom gland.

Its subcellular location is the secreted. Its function is as follows. Agglutinates erythrocytes. This chain is U5-theraphotoxin-Hs1a 4, found in Cyriopagopus schmidti (Chinese bird spider).